A 118-amino-acid chain; its full sequence is Large ribosomal subunit protein bL20 (118 aa).

Belongs to the bacterial ribosomal protein bL20 family.

Binds directly to 23S ribosomal RNA and is necessary for the in vitro assembly process of the 50S ribosomal subunit. It is not involved in the protein synthesizing functions of that subunit. This Yersinia enterocolitica serotype O:8 / biotype 1B (strain NCTC 13174 / 8081) protein is Large ribosomal subunit protein bL20.